The sequence spans 319 residues: NADH-quinone oxidoreductase subunit H 1 (319 aa).

The next 9 helical transmembrane spans lie at 1 to 21, 77 to 97, 107 to 127, 147 to 167, 179 to 199, 214 to 234, 238 to 258, 262 to 282, and 293 to 313; these read MIGL…LLVV, ILAP…VAFG, VGVL…MLGA, LAYE…AGSL, VWFV…GVAA, LVAG…FLGE, VLLV…GPWL, IWFG…RATL, and FAWK…GIVV.

This sequence belongs to the complex I subunit 1 family. As to quaternary structure, NDH-1 is composed of 14 different subunits. Subunits NuoA, H, J, K, L, M, N constitute the membrane sector of the complex.

Its subcellular location is the cell inner membrane. It catalyses the reaction a quinone + NADH + 5 H(+)(in) = a quinol + NAD(+) + 4 H(+)(out). Its function is as follows. NDH-1 shuttles electrons from NADH, via FMN and iron-sulfur (Fe-S) centers, to quinones in the respiratory chain. The immediate electron acceptor for the enzyme in this species is believed to be ubiquinone. Couples the redox reaction to proton translocation (for every two electrons transferred, four hydrogen ions are translocated across the cytoplasmic membrane), and thus conserves the redox energy in a proton gradient. This subunit may bind ubiquinone. The polypeptide is NADH-quinone oxidoreductase subunit H 1 (Rhodopseudomonas palustris (strain HaA2)).